The chain runs to 1001 residues: O-GlcNAcase NagJ (1001 aa).

An N-terminal signal peptide occupies residues 1–30 (MKRKMLKRLLTSAFACMFIANGLITTTVRA). Residues 179–469 (VSARGIVEGF…WNRAIDMLYG (291 aa)) are catalytic domain. The GH84 domain maps to 180–452 (SARGIVEGFY…TAADYSWNMD (273 aa)). The a protein site is built by glycine 187, lysine 218, and aspartate 297. The active-site Proton donor is aspartate 298. A protein-binding positions include tyrosine 335, 394 to 396 (WWN), aspartate 401, and asparagine 429. 2 coiled-coil regions span residues 515–543 (KEDA…KANL) and 573–597 (VAQL…LNTA). Positions 916 to 1001 (PVRDFKASEI…KESLTLRTAR (86 aa)) constitute a Fibronectin type-III domain.

Belongs to the glycosyl hydrolase 84 family.

The catalysed reaction is 3-O-(N-acetyl-beta-D-glucosaminyl)-L-seryl-[protein] + H2O = N-acetyl-D-glucosamine + L-seryl-[protein]. The enzyme catalyses 3-O-(N-acetyl-beta-D-glucosaminyl)-L-threonyl-[protein] + H2O = L-threonyl-[protein] + N-acetyl-D-glucosamine. Inhibited by O-(2-acetamido-2-deoxy-D-glucopyranosylidene)amino-N-phenyl-carbamate (PUGNAc) and streptozotocin. Its function is as follows. Binds carbohydrates. Capable of hydrolyzing the glycosidic link of O-GlcNAcylated proteins. Can bind and deglycosylate O-glycosylated peptides from mammals. This Clostridium perfringens (strain ATCC 13124 / DSM 756 / JCM 1290 / NCIMB 6125 / NCTC 8237 / Type A) protein is O-GlcNAcase NagJ (nagJ).